The chain runs to 505 residues: Cytochrome P450 76A2 (505 aa).

Cys-448 contributes to the heme binding site.

Belongs to the cytochrome P450 family. Requires heme as cofactor.

This chain is Cytochrome P450 76A2 (CYP76A2), found in Solanum melongena (Eggplant).